The chain runs to 367 residues: MSASFTTIAWRNDAVLLLDQQALPGEERYLTCTRFEEVLTAIRDLTVRGAPAIGVASAMGIALGALSLPDDSPEAFCNGFEALCDRFAQARPTARNLFWAVERMKRCFGEHFHPDTSSECSSAAPGKEIARTLAAVRKALVAEARRMAEEDVAINRRIGHYGQVLIRDGYRILTHCNAGALATAGYGTALGVIRAAREAGKQVQVFADETRPVLQGARLTAWELQKENIPVTLITDSMAGFLMKQGRIDCILVGADRIATNGDTANKIGTYTLAVLAAAHSVPLYVAAPLSTIDRKLSSGNEIPIEERPAEEILTIRGVPIAPAGVEVYNPAFDVTPGHYISAIITEAGIAEFPYESSLERLFLSFP.

Substrate-binding positions include 48 to 50, Arg91, and Gln215; that span reads RGA. Catalysis depends on Asp256, which acts as the Proton donor. 266–267 serves as a coordination point for substrate; it reads NK.

Belongs to the eIF-2B alpha/beta/delta subunits family. MtnA subfamily.

It carries out the reaction 5-(methylsulfanyl)-alpha-D-ribose 1-phosphate = 5-(methylsulfanyl)-D-ribulose 1-phosphate. The protein operates within amino-acid biosynthesis; L-methionine biosynthesis via salvage pathway; L-methionine from S-methyl-5-thio-alpha-D-ribose 1-phosphate: step 1/6. Its function is as follows. Catalyzes the interconversion of methylthioribose-1-phosphate (MTR-1-P) into methylthioribulose-1-phosphate (MTRu-1-P). In Syntrophus aciditrophicus (strain SB), this protein is Methylthioribose-1-phosphate isomerase.